The following is a 244-amino-acid chain: RNA transcription, translation and transport factor protein (244 aa).

N6-acetyllysine occurs at positions 20, 62, and 98.

Belongs to the RTRAF family. Homodimer. Interacts with FAM98A (via N- and C-terminus). Interacts with NIN; which may prevent phosphorylation of NIN. Interacts with POLR2A. Component of a tRNA-splicing ligase complex with FAM98B, DDX1 and RTCB. As to quaternary structure, (Microbial infection) Interacts with influenza A virus (IAV) RNA polymerase subunits PA, PB1 and PB2, and nucleocapsid NP. Associates with IAV polymerase complexes both in the nucleus and cytosol. Associates with IAV ribonucleoproteins (vRNP) packaged in virions. Interacts with hepatitis C virus core protein p19. In terms of tissue distribution, widely expressed. Expressed at high level in heart and skeletal muscle. Expressed at intermediate level in liver, pancreas, fetal brain and fetal lung. Weakly expressed in adult brain, adult lung, placenta, fetal liver and fetal kidney. Overexpressed in many brain tumors.

The protein localises to the nucleus. It is found in the cytoplasm. The protein resides in the cytosol. Its subcellular location is the perinuclear region. It localises to the cytoskeleton. The protein localises to the microtubule organizing center. It is found in the centrosome. RNA-binding protein involved in modulation of mRNA transcription by Polymerase II. Component of the tRNA-splicing ligase complex and is required for tRNA ligation. May be required for RNA transport. Functionally, (Microbial infection) In case of infection by influenza virus A (IVA), is involved in viral replication. In Homo sapiens (Human), this protein is RNA transcription, translation and transport factor protein.